The following is a 144-amino-acid chain: Large ribosomal subunit protein uL16 (144 aa).

Over residues 1-19 (MLLPKRVKYRRQHRPKTTG) the composition is skewed to basic residues. Residues 1 to 23 (MLLPKRVKYRRQHRPKTTGRSKG) are disordered.

Belongs to the universal ribosomal protein uL16 family. As to quaternary structure, part of the 50S ribosomal subunit.

Its function is as follows. Binds 23S rRNA and is also seen to make contacts with the A and possibly P site tRNAs. The polypeptide is Large ribosomal subunit protein uL16 (Staphylococcus saprophyticus subsp. saprophyticus (strain ATCC 15305 / DSM 20229 / NCIMB 8711 / NCTC 7292 / S-41)).